Reading from the N-terminus, the 667-residue chain is Long-chain-fatty-acid--CoA ligase ACSBG2 (667 aa).

Residues 1 to 14 (MTQEKKAEDPDRGM) show a composition bias toward basic and acidic residues. The disordered stretch occupies residues 1–20 (MTQEKKAEDPDRGMDTTSAA). ATP contacts are provided by residues 227 to 235 (TSGTTGSPK), 418 to 423 (EIYGMT), Asp-496, Arg-511, and Arg-624.

Belongs to the ATP-dependent AMP-binding enzyme family. Bubblegum subfamily.

The protein resides in the cytoplasm. The protein localises to the membrane. The enzyme catalyses a long-chain fatty acid + ATP + CoA = a long-chain fatty acyl-CoA + AMP + diphosphate. The catalysed reaction is (5Z,8Z,11Z,14Z)-eicosatetraenoate + ATP + CoA = (5Z,8Z,11Z,14Z)-eicosatetraenoyl-CoA + AMP + diphosphate. It carries out the reaction hexadecanoate + ATP + CoA = hexadecanoyl-CoA + AMP + diphosphate. It catalyses the reaction (9Z)-octadecenoate + ATP + CoA = (9Z)-octadecenoyl-CoA + AMP + diphosphate. The enzyme catalyses (9Z,12Z)-octadecadienoate + ATP + CoA = (9Z,12Z)-octadecadienoyl-CoA + AMP + diphosphate. The catalysed reaction is tetracosanoate + ATP + CoA = tetracosanoyl-CoA + AMP + diphosphate. Functionally, catalyzes the conversion of fatty acids such as long chain and very long-chain fatty acids to their active form acyl-CoAs for both synthesis of cellular lipids, and degradation via beta-oxidation. Can activate diverse saturated, monosaturated and polyunsaturated fatty acids. Has increased ability to activate oleic and linoleic acid. May play a role in spermatogenesis. The protein is Long-chain-fatty-acid--CoA ligase ACSBG2 of Rattus norvegicus (Rat).